Consider the following 103-residue polypeptide: Large ribosomal subunit protein uL24 (103 aa).

This sequence belongs to the universal ribosomal protein uL24 family. In terms of assembly, part of the 50S ribosomal subunit.

In terms of biological role, one of two assembly initiator proteins, it binds directly to the 5'-end of the 23S rRNA, where it nucleates assembly of the 50S subunit. Functionally, one of the proteins that surrounds the polypeptide exit tunnel on the outside of the subunit. This Sinorhizobium fredii (strain NBRC 101917 / NGR234) protein is Large ribosomal subunit protein uL24.